A 66-amino-acid chain; its full sequence is MAKNKGVRIVVTLECTECRSASASEKRSPGVSRYTTEKNRRNTTERLEIMKFCPQLNKMTLHKEIK.

This sequence belongs to the bacterial ribosomal protein bL33 family.

This is Large ribosomal subunit protein bL33 from Synechococcus sp. (strain CC9902).